We begin with the raw amino-acid sequence, 520 residues long: 2-isopropylmalate synthase (520 aa).

The Pyruvate carboxyltransferase domain occupies 4 to 266; sequence VEFLDTTLRD…TSDIVLNETV (263 aa). Residues D13, H201, H203, and N237 each contribute to the Mn(2+) site. A regulatory domain region spans residues 390 to 520; that stretch reads HFGDLKLTSN…AVSFRDVPTN (131 aa).

Belongs to the alpha-IPM synthase/homocitrate synthase family. LeuA type 1 subfamily. In terms of assembly, homodimer. It depends on Mn(2+) as a cofactor.

Its subcellular location is the cytoplasm. The catalysed reaction is 3-methyl-2-oxobutanoate + acetyl-CoA + H2O = (2S)-2-isopropylmalate + CoA + H(+). The protein operates within amino-acid biosynthesis; L-leucine biosynthesis; L-leucine from 3-methyl-2-oxobutanoate: step 1/4. Catalyzes the condensation of the acetyl group of acetyl-CoA with 3-methyl-2-oxobutanoate (2-ketoisovalerate) to form 3-carboxy-3-hydroxy-4-methylpentanoate (2-isopropylmalate). The chain is 2-isopropylmalate synthase from Streptococcus gallolyticus (strain UCN34).